The chain runs to 331 residues: UPF0329 protein ECU01_0080/ECU01_1530/ECU02_1560/ECU04_0090/ECU08_0010/ECU08_2090 (331 aa).

Residues Gln-305–Arg-320 are compositionally biased toward basic and acidic residues. The tract at residues Gln-305–Leu-331 is disordered. A compositionally biased stretch (basic residues) spans Arg-321–Leu-331.

Belongs to the UPF0329 family.

This Encephalitozoon cuniculi (strain GB-M1) (Microsporidian parasite) protein is UPF0329 protein ECU01_0080/ECU01_1530/ECU02_1560/ECU04_0090/ECU08_0010/ECU08_2090.